We begin with the raw amino-acid sequence, 257 residues long: MLDTILQTKREEIERLALPEQVEVKKVSLYDALRKPNRSLGLLAEVKKASPSKGLIRADFHPVEIGKSYEAAGADAISVLTDETYFQGHRDYLTKVKQAVNIPVLRKDFIIDRAQILESVRIGADAILLIVSTIPTTRLKELYDEAHELGLECLVEVHSEEEIAELFSAFTPTLIGVNNRNLKTFETDVAQTEKMAQVIPHGTMFLSESGLYTYDDLQRVKRAGATGVLVGESLMRASSPEEGIQHLFGGEPVATDA.

It belongs to the TrpC family.

The enzyme catalyses 1-(2-carboxyphenylamino)-1-deoxy-D-ribulose 5-phosphate + H(+) = (1S,2R)-1-C-(indol-3-yl)glycerol 3-phosphate + CO2 + H2O. Its pathway is amino-acid biosynthesis; L-tryptophan biosynthesis; L-tryptophan from chorismate: step 4/5. The chain is Indole-3-glycerol phosphate synthase from Halalkalibacterium halodurans (strain ATCC BAA-125 / DSM 18197 / FERM 7344 / JCM 9153 / C-125) (Bacillus halodurans).